The primary structure comprises 264 residues: Zinc import ATP-binding protein ZnuC (264 aa).

Positions 20–235 (VQLKNIEVTF…PNFIHFFGDQ (216 aa)) constitute an ABC transporter domain. ATP is bound at residue 52 to 59 (GPNGGGKS).

It belongs to the ABC transporter superfamily. Zinc importer (TC 3.A.1.15.5) family. The complex is composed of two ATP-binding proteins (ZnuC), two transmembrane proteins (ZnuB) and a solute-binding protein (ZnuA).

The protein resides in the cell inner membrane. It carries out the reaction Zn(2+)(out) + ATP(in) + H2O(in) = Zn(2+)(in) + ADP(in) + phosphate(in) + H(+)(in). Functionally, part of the ABC transporter complex ZnuABC involved in zinc import. Responsible for energy coupling to the transport system. The chain is Zinc import ATP-binding protein ZnuC from Haemophilus ducreyi (strain 35000HP / ATCC 700724).